We begin with the raw amino-acid sequence, 530 residues long: Chaperone Ric-8A (530 aa).

Phosphoserine is present on serine 435. Phosphothreonine occurs at positions 440 and 442. Phosphoserine occurs at positions 501, 522, 523, and 527.

The protein belongs to the synembryn family. In terms of assembly, interacts with GDP-bound G alpha proteins GNAI1, GNAO1 and GNAQ, and with GNA13 with lower affinity. Does not interact with G-alpha proteins when they are in complex with subunits beta and gamma. Interacts (via C-terminus) with RGS14; the interaction stimulates the dissociation of the complex between RGS14 and the active GTP-bound form of GNAI1. Interacts with NCS1; interaction is favored in the absence of Ca(2+) and myristoylation of NCS1 is not required. Post-translationally, phosphorylated at Ser-435 and Thr-440 by CK2, stabilizing its interface with G alpha proteins.

It localises to the cytoplasm. The protein resides in the cell cortex. Chaperone that specifically binds and folds nascent G alpha proteins prior to G protein heterotrimer formation, promoting their stability and activity: folds GNAI1, GNAO1, GNA13 and GNAQ. Does not fold G(s) G-alpha proteins GNAS nor GNAL. Also acts as a guanine nucleotide exchange factor (GEF) for G alpha proteins by stimulating exchange of bound GDP for free GTP. Involved in regulation of microtubule pulling forces during mitotic movement of chromosomes by stimulating G(i)-alpha protein (GNAI1), possibly leading to release G(i)-alpha-GTP and NuMA proteins from the NuMA-GPSM2-G(i)-alpha-GDP complex. Also acts as an activator for G(q)-alpha (GNAQ) protein by enhancing the G(q)-coupled receptor-mediated ERK activation. In Pongo abelii (Sumatran orangutan), this protein is Chaperone Ric-8A (RIC8A).